Reading from the N-terminus, the 299-residue chain is Regucalcin (299 aa).

Position 18 (Glu18) interacts with a divalent metal cation. The substrate site is built by Arg101, Asn103, and Glu121. Lys144 bears the N6-succinyllysine mark. Positions 154 and 204 each coordinate a divalent metal cation. The active-site Proton donor/acceptor is the Asp204. An N6-succinyllysine mark is found at Lys244 and Lys253.

Belongs to the SMP-30/CGR1 family. Monomer. The cofactor is Zn(2+). It depends on Mn(2+) as a cofactor. Ca(2+) serves as cofactor. Requires Mg(2+) as cofactor.

It is found in the cytoplasm. It catalyses the reaction D-glucono-1,5-lactone + H2O = D-gluconate + H(+). In terms of biological role, gluconolactonase with low activity towards other sugar lactones, including gulonolactone and galactonolactone. Can also hydrolyze diisopropyl phosphorofluoridate and phenylacetate (in vitro). Calcium-binding protein. Modulates Ca(2+) signaling, and Ca(2+)-dependent cellular processes and enzyme activities. This is Regucalcin (RGN) from Pongo abelii (Sumatran orangutan).